Here is a 366-residue protein sequence, read N- to C-terminus: G kinase-anchoring protein 1 (366 aa).

An interaction with IRS1 region spans residues 1 to 95; the sequence is MASAVLSSVP…SHAVCNAQHD (95 aa). Disordered regions lie at residues 20–110 and 147–177; these read QVDS…REEN and EYED…DRPL. Ser-23, Ser-25, and Ser-27 each carry phosphoserine. The span at 39–50 shows a compositional bias: polar residues; it reads TGKSQTLGSKST. Residues 47–77 are a coiled coil; that stretch reads SKSTTNEKKREKRRKKKEQQQSEANELRNLA. At Ser-106 the chain carries Phosphoserine; by PKG. 2 coiled-coil regions span residues 128-160 and 243-353; these read ADLE…QSKV and EHNQ…YQGG.

The protein belongs to the GKAP1 family. In terms of assembly, interacts with PRKG1 and IRS1.

It localises to the golgi apparatus. Its function is as follows. Regulates insulin-dependent IRS1 tyrosine phosphorylation in adipocytes by modulating the availability of IRS1 to IR tyrosine kinase. Its association with IRS1 is required for insulin-induced translocation of SLC2A4 to the cell membrane. Involved in TNF-induced impairment of insulin-dependent IRS1 tyrosine phosphorylation. This is G kinase-anchoring protein 1 (GKAP1) from Homo sapiens (Human).